The following is a 155-amino-acid chain: Protein-export protein SecB (155 aa).

It belongs to the SecB family. Homotetramer, a dimer of dimers. One homotetramer interacts with 1 SecA dimer.

It is found in the cytoplasm. In terms of biological role, one of the proteins required for the normal export of preproteins out of the cell cytoplasm. It is a molecular chaperone that binds to a subset of precursor proteins, maintaining them in a translocation-competent state. It also specifically binds to its receptor SecA. The sequence is that of Protein-export protein SecB from Methylococcus capsulatus (strain ATCC 33009 / NCIMB 11132 / Bath).